We begin with the raw amino-acid sequence, 177 residues long: MASTRAAIRYAKAILDLANSKGVAEAVNNDMKSIASAIETNTELSTFIQNPTTTVEVKESALLEVFADVNGVTKGLFHLLFENKRFEILDAIAVEYNKLFDESNGVEVAKVTTAIPMDAALEAKVLAKVATLSDKKITIENVVDPSIIGGFILRIGDNQYNASVANRLQVLKRELSN.

Belongs to the ATPase delta chain family. As to quaternary structure, F-type ATPases have 2 components, F(1) - the catalytic core - and F(0) - the membrane proton channel. F(1) has five subunits: alpha(3), beta(3), gamma(1), delta(1), epsilon(1). F(0) has three main subunits: a(1), b(2) and c(10-14). The alpha and beta chains form an alternating ring which encloses part of the gamma chain. F(1) is attached to F(0) by a central stalk formed by the gamma and epsilon chains, while a peripheral stalk is formed by the delta and b chains.

It is found in the cell inner membrane. Functionally, f(1)F(0) ATP synthase produces ATP from ADP in the presence of a proton or sodium gradient. F-type ATPases consist of two structural domains, F(1) containing the extramembraneous catalytic core and F(0) containing the membrane proton channel, linked together by a central stalk and a peripheral stalk. During catalysis, ATP synthesis in the catalytic domain of F(1) is coupled via a rotary mechanism of the central stalk subunits to proton translocation. Its function is as follows. This protein is part of the stalk that links CF(0) to CF(1). It either transmits conformational changes from CF(0) to CF(1) or is implicated in proton conduction. The sequence is that of ATP synthase subunit delta from Flavobacterium johnsoniae (strain ATCC 17061 / DSM 2064 / JCM 8514 / BCRC 14874 / CCUG 350202 / NBRC 14942 / NCIMB 11054 / UW101) (Cytophaga johnsonae).